A 457-amino-acid chain; its full sequence is 6-phosphofructo-2-kinase/fructose-2,6-bisphosphatase (457 aa).

Positions 1 to 20 (MEIPPGLETTKRKVAHSDEH) are disordered. The segment at 1–244 (MEIPPGLETT…VYFLMNIHLL (244 aa)) is 6-phosphofructo-2-kinase. Basic and acidic residues predominate over residues 9–20 (TTKRKVAHSDEH). 36-44 (GLPARGKTY) lines the ATP pocket. Residues arginine 69 and arginine 98 each coordinate beta-D-fructose 6-phosphate. Aspartate 124 is a catalytic residue. Beta-D-fructose 6-phosphate is bound by residues threonine 126 and arginine 132. Cysteine 154 is an active-site residue. Position 163 to 168 (163 to 168 (NVTDVK)) interacts with ATP. Beta-D-fructose 6-phosphate-binding residues include lysine 168, arginine 190, and tyrosine 194. The interval 245–457 (PRSIYLTRHG…QLPLCDSPRD (213 aa)) is fructose-2,6-bisphosphatase. Position 252 (arginine 252) interacts with beta-D-fructose 2,6-bisphosphate. The active-site Tele-phosphohistidine intermediate is the histidine 253. Beta-D-fructose 2,6-bisphosphate contacts are provided by asparagine 259 and glycine 265. Catalysis depends on glutamate 324, which acts as the Proton donor/acceptor. Residues tyrosine 335, arginine 349, lysine 353, tyrosine 364, glutamine 390, and arginine 394 each contribute to the beta-D-fructose 2,6-bisphosphate site. 346–349 (ADDR) contacts ATP. Residues 390–394 (QAVLR) and tyrosine 426 each bind ATP.

This sequence in the C-terminal section; belongs to the phosphoglycerate mutase family.

It catalyses the reaction beta-D-fructose 2,6-bisphosphate + H2O = beta-D-fructose 6-phosphate + phosphate. The enzyme catalyses beta-D-fructose 6-phosphate + ATP = beta-D-fructose 2,6-bisphosphate + ADP + H(+). Synthesis and degradation of fructose 2,6-bisphosphate. The polypeptide is 6-phosphofructo-2-kinase/fructose-2,6-bisphosphatase (Caenorhabditis elegans).